A 248-amino-acid polypeptide reads, in one-letter code: Ubiquinone/menaquinone biosynthesis C-methyltransferase UbiE (248 aa).

Residues S68 and D92 each coordinate S-adenosyl-L-methionine.

It belongs to the class I-like SAM-binding methyltransferase superfamily. MenG/UbiE family.

The enzyme catalyses a 2-demethylmenaquinol + S-adenosyl-L-methionine = a menaquinol + S-adenosyl-L-homocysteine + H(+). It catalyses the reaction a 2-methoxy-6-(all-trans-polyprenyl)benzene-1,4-diol + S-adenosyl-L-methionine = a 5-methoxy-2-methyl-3-(all-trans-polyprenyl)benzene-1,4-diol + S-adenosyl-L-homocysteine + H(+). Its pathway is quinol/quinone metabolism; menaquinone biosynthesis; menaquinol from 1,4-dihydroxy-2-naphthoate: step 2/2. The protein operates within cofactor biosynthesis; ubiquinone biosynthesis. In terms of biological role, methyltransferase required for the conversion of demethylmenaquinol (DMKH2) to menaquinol (MKH2) and the conversion of 2-polyprenyl-6-methoxy-1,4-benzoquinol (DDMQH2) to 2-polyprenyl-3-methyl-6-methoxy-1,4-benzoquinol (DMQH2). This is Ubiquinone/menaquinone biosynthesis C-methyltransferase UbiE from Rickettsia massiliae (strain Mtu5).